The primary structure comprises 812 residues: Mitochondrial intermediate peptidase (812 aa).

A mitochondrion-targeting transit peptide spans M1 to L35. The segment at S518 to S544 is disordered. H587 lines the Zn(2+) pocket. E588 is a catalytic residue. H591 and H594 together coordinate Zn(2+).

The protein belongs to the peptidase M3 family. Zn(2+) is required as a cofactor.

It localises to the mitochondrion matrix. It catalyses the reaction Release of an N-terminal octapeptide as second stage of processing of some proteins imported into the mitochondrion.. Its function is as follows. Cleaves proteins, imported into the mitochondrion, to their mature size. While most mitochondrial precursor proteins are processed to the mature form in one step by mitochondrial processing peptidase (MPP), the sequential cleavage by MIP of an octapeptide after initial processing by MPP is a required step for a subgroup of nuclear-encoded precursor proteins destined for the matrix or the inner membrane. The chain is Mitochondrial intermediate peptidase (OCT1) from Pyricularia oryzae (strain 70-15 / ATCC MYA-4617 / FGSC 8958) (Rice blast fungus).